A 263-amino-acid polypeptide reads, in one-letter code: Ribonuclease HII (263 aa).

The RNase H type-2 domain occupies 71–262; sequence QAIAGIDEVG…VKSMCCDSTN (192 aa). A divalent metal cation is bound by residues aspartate 77, glutamate 78, and aspartate 172.

It belongs to the RNase HII family. Requires Mn(2+) as cofactor. Mg(2+) serves as cofactor.

The protein localises to the cytoplasm. It carries out the reaction Endonucleolytic cleavage to 5'-phosphomonoester.. Its function is as follows. Endonuclease that specifically degrades the RNA of RNA-DNA hybrids. The polypeptide is Ribonuclease HII (Streptococcus pyogenes serotype M5 (strain Manfredo)).